A 90-amino-acid chain; its full sequence is Accessory gland-specific peptide 26Ab (90 aa).

The signal sequence occupies residues 1-21 (MNYFAVLCIFSCICFWQFSDA).

Main cells of the accessory glands of males.

The protein resides in the secreted. The protein localises to the extracellular space. Functionally, this protein is transferred from male to female during mating and may affect egglaying and behavior after mating. In Drosophila simulans (Fruit fly), this protein is Accessory gland-specific peptide 26Ab (Acp26Ab).